Reading from the N-terminus, the 150-residue chain is Large ribosomal subunit protein uL15 (150 aa).

The tract at residues 12–43 is disordered; that stretch reads AKKRKKRVGCGESSGHGKTSGRGHKGQKARAG. Positions 30–39 are enriched in basic residues; the sequence is TSGRGHKGQK.

The protein belongs to the universal ribosomal protein uL15 family. Part of the 50S ribosomal subunit.

Its function is as follows. Binds to the 23S rRNA. The chain is Large ribosomal subunit protein uL15 from Methylacidiphilum infernorum (isolate V4) (Methylokorus infernorum (strain V4)).